A 98-amino-acid chain; its full sequence is Small ribosomal subunit protein bS20 (98 aa).

This sequence belongs to the bacterial ribosomal protein bS20 family.

Its function is as follows. Binds directly to 16S ribosomal RNA. The protein is Small ribosomal subunit protein bS20 of Parasynechococcus marenigrum (strain WH8102).